We begin with the raw amino-acid sequence, 123 residues long: uncharacterized protein (123 aa).

2 disordered regions span residues 1 to 33 (MAPPGGKINRPRTELKKKLFKRRRVLSRDRRRK) and 82 to 123 (EKAA…EDKS). The span at 18-33 (KLFKRRRVLSRDRRRK) shows a compositional bias: basic residues.

This is an uncharacterized protein from Mus musculus (Mouse).